Consider the following 310-residue polypeptide: Protein translocase subunit SecF (310 aa).

6 consecutive transmembrane segments (helical) span residues 20–42, 140–160, 164–184, 194–214, 246–266, and 272–292; these read FKKV…IGIY, IEAG…YIWV, WYFG…ALGF, LSTI…SVVI, ILTV…GGEA, and VLVF…SAPI.

This sequence belongs to the SecD/SecF family. SecF subfamily. In terms of assembly, forms a complex with SecD. Part of the essential Sec protein translocation apparatus which comprises SecA, SecYEG and auxiliary proteins SecDF-YajC and YidC.

Its subcellular location is the cell inner membrane. Its function is as follows. Part of the Sec protein translocase complex. Interacts with the SecYEG preprotein conducting channel. SecDF uses the proton motive force (PMF) to complete protein translocation after the ATP-dependent function of SecA. This is Protein translocase subunit SecF from Rickettsia canadensis (strain McKiel).